The chain runs to 239 residues: NAD(P)H-quinone oxidoreductase subunit K, chloroplastic (239 aa).

Residues cysteine 43, cysteine 44, cysteine 108, and cysteine 139 each contribute to the [4Fe-4S] cluster site. The tract at residues 217–239 is disordered; it reads KSSVSSRELGNESGKEDVSIQNK. Basic and acidic residues predominate over residues 225-239; sequence LGNESGKEDVSIQNK.

Belongs to the complex I 20 kDa subunit family. As to quaternary structure, NDH is composed of at least 16 different subunits, 5 of which are encoded in the nucleus. Requires [4Fe-4S] cluster as cofactor.

It localises to the plastid. Its subcellular location is the chloroplast thylakoid membrane. The enzyme catalyses a plastoquinone + NADH + (n+1) H(+)(in) = a plastoquinol + NAD(+) + n H(+)(out). It carries out the reaction a plastoquinone + NADPH + (n+1) H(+)(in) = a plastoquinol + NADP(+) + n H(+)(out). NDH shuttles electrons from NAD(P)H:plastoquinone, via FMN and iron-sulfur (Fe-S) centers, to quinones in the photosynthetic chain and possibly in a chloroplast respiratory chain. The immediate electron acceptor for the enzyme in this species is believed to be plastoquinone. Couples the redox reaction to proton translocation, and thus conserves the redox energy in a proton gradient. In Acorus calamus var. americanus (American sweet flag), this protein is NAD(P)H-quinone oxidoreductase subunit K, chloroplastic.